Here is a 578-residue protein sequence, read N- to C-terminus: ATP-dependent RNA helicase has-1 (578 aa).

Positions 1–91 (MASEFSKKRK…KDAEAGDELT (91 aa)) are disordered. Residues 13–26 (DAKIATEDGAATDK) are compositionally biased toward basic and acidic residues. Basic residues predominate over residues 27 to 36 (KTKKVKKDKK). Acidic residues-rich tracts occupy residues 43 to 54 (EVVEDATPEEEN) and 77 to 88 (EDSDDKDAEAGD). The Q motif signature appears at 107–135 (TDFSELNLSDKTMKAIAEMGFTKMTEIQR). Residues 138–313 (IPPLLAGKDV…RISLRPGPLY (176 aa)) form the Helicase ATP-binding domain. Position 151-158 (151-158 (AKTGSGKT)) interacts with ATP. The DEAD box signature appears at 260-263 (DEAD). Positions 339-355 (KRFLLLFSFLKKMQKKK) match the Bipartite nuclear localization signal motif. The Helicase C-terminal domain occupies 343-497 (LLFSFLKKMQ…NVQSQLEKLI (155 aa)). Positions 556-578 (SMSRDKKQTSRRAYGSQPKQNRH) are disordered.

The protein belongs to the DEAD box helicase family. DDX18/HAS1 subfamily. In terms of assembly, associates in the nucleolus with the 60S and pre-60S ribosomal subunits.

The protein resides in the nucleus. It localises to the nucleolus. It carries out the reaction ATP + H2O = ADP + phosphate + H(+). Functionally, ATP-dependent RNA helicase involved in 40S ribosomal subunit biogenesis. Required for the processing and cleavage of 35S pre-rRNA at sites A0, A1, and A2, leading to mature 18S rRNA. In Neurospora crassa (strain ATCC 24698 / 74-OR23-1A / CBS 708.71 / DSM 1257 / FGSC 987), this protein is ATP-dependent RNA helicase has-1 (has-1).